A 1091-amino-acid chain; its full sequence is ATP-dependent RNA helicase ddx54 (1091 aa).

Disordered regions lie at residues 1–63 and 150–231; these read MVKP…KEEF and DNSN…KTGG. Basic and acidic residues predominate over residues 26–35; it reads MKGKKLETKS. Residues 150 to 161 show a composition bias toward polar residues; the sequence is DNSNFDNNGDQF. Residues 196 to 207 are compositionally biased toward basic and acidic residues; that stretch reads KKEEIESSEKFE. Residues 230–258 carry the Q motif motif; it reads GGFQSMDLTKNLLKAILKKGFNVPTPIQR. A Helicase ATP-binding domain is found at 261-433; that stretch reads IPMILDGHDI…RAGLNNPKLI (173 aa). 274–281 is an ATP binding site; sequence ARTGSGKT. Positions 381-384 match the DEAD box motif; it reads DEAD. In terms of domain architecture, Helicase C-terminal spans 478–632; sequence TETTTTTTTN…KFQYEGQTIN (155 aa). Disordered stretches follow at residues 801-896 and 933-1091; these read EEML…TPEN and KRKG…KSRK. A compositionally biased stretch (basic and acidic residues) spans 814-823; that stretch reads DNNKDIKMNE. Residues 824 to 855 are compositionally biased toward acidic residues; it reads NDDENDDDDEEGENDDDEEEENEKDEDDEEDE. Basic and acidic residues-rich tracts occupy residues 865-874, 944-975, and 1008-1019; these read ESSDKNDNNK, DADR…EEWK, and QGREKEKKDNKA. A compositionally biased stretch (basic residues) spans 1020–1029; the sequence is SHAKGSHGLK. Residues 1031-1052 show a composition bias toward basic and acidic residues; sequence RPSELKDKNQISKNRSEKERKM. Gly residues predominate over residues 1068–1079; sequence SGGGGGGKGSKF.

The protein belongs to the DEAD box helicase family. DDX54/DBP10 subfamily.

The protein localises to the nucleus. It localises to the nucleolus. The catalysed reaction is ATP + H2O = ADP + phosphate + H(+). Its function is as follows. ATP-binding RNA helicase which may be involved in the ribosome biogenesis. In Dictyostelium discoideum (Social amoeba), this protein is ATP-dependent RNA helicase ddx54 (helA).